The primary structure comprises 1194 residues: UPF0507 protein PICST_55861 (1194 aa).

The VPS9 domain maps to 324–475; that stretch reads QSYDPEAVKF…LSSSLSDELS (152 aa).

The protein belongs to the UPF0507 family.

The polypeptide is UPF0507 protein PICST_55861 (Scheffersomyces stipitis (strain ATCC 58785 / CBS 6054 / NBRC 10063 / NRRL Y-11545) (Yeast)).